The chain runs to 213 residues: Thymidylate kinase (213 aa).

11–18 (GGEGAGKT) lines the ATP pocket.

Belongs to the thymidylate kinase family.

The catalysed reaction is dTMP + ATP = dTDP + ADP. Functionally, phosphorylation of dTMP to form dTDP in both de novo and salvage pathways of dTTP synthesis. The protein is Thymidylate kinase of Shouchella clausii (strain KSM-K16) (Alkalihalobacillus clausii).